Reading from the N-terminus, the 556-residue chain is Thermosome subunit beta (556 aa).

Residues 530–556 (LSTDKGDDDGGAGGMGGGMGGGMGGMM) form a disordered region. Residues 540-556 (GAGGMGGGMGGGMGGMM) are compositionally biased toward gly residues.

It belongs to the TCP-1 chaperonin family. In terms of assembly, forms an oligomeric complex of eight-membered rings.

In terms of biological role, molecular chaperone; binds unfolded polypeptides in vitro, and has a weak ATPase activity. The protein is Thermosome subunit beta (thsB) of Halobacterium salinarum (strain ATCC 700922 / JCM 11081 / NRC-1) (Halobacterium halobium).